We begin with the raw amino-acid sequence, 150 residues long: Putative FAD-linked sulfhydryl oxidase 088R (150 aa).

An ERV/ALR sulfhydryl oxidase domain is found at 24–128 (GPFGPSGFGP…VTLQKAICIY (105 aa)). Cys-74 and Cys-77 are disulfide-bonded.

It depends on FAD as a cofactor.

It carries out the reaction 2 R'C(R)SH + O2 = R'C(R)S-S(R)CR' + H2O2. Functionally, FAD-dependent sulfhydryl oxidase that catalyzes disulfide bond formation. This Dryophytes versicolor (chameleon treefrog) protein is Putative FAD-linked sulfhydryl oxidase 088R.